We begin with the raw amino-acid sequence, 235 residues long: Phosphoribosylaminoimidazole-succinocarboxamide synthase (235 aa).

It belongs to the SAICAR synthetase family.

It catalyses the reaction 5-amino-1-(5-phospho-D-ribosyl)imidazole-4-carboxylate + L-aspartate + ATP = (2S)-2-[5-amino-1-(5-phospho-beta-D-ribosyl)imidazole-4-carboxamido]succinate + ADP + phosphate + 2 H(+). It functions in the pathway purine metabolism; IMP biosynthesis via de novo pathway; 5-amino-1-(5-phospho-D-ribosyl)imidazole-4-carboxamide from 5-amino-1-(5-phospho-D-ribosyl)imidazole-4-carboxylate: step 1/2. The polypeptide is Phosphoribosylaminoimidazole-succinocarboxamide synthase (Streptococcus gordonii (strain Challis / ATCC 35105 / BCRC 15272 / CH1 / DL1 / V288)).